A 644-amino-acid chain; its full sequence is Threonine--tRNA ligase (644 aa).

Residues 1–62 form the TGS domain; it reads MSFSVTLPDG…DSDVEIAIIT (62 aa). The segment at 240–538 is catalytic; that stretch reads DHRTIGRDLD…LTEIYKGAFP (299 aa). Positions 334, 385, and 515 each coordinate Zn(2+).

It belongs to the class-II aminoacyl-tRNA synthetase family. Homodimer. The cofactor is Zn(2+).

The protein localises to the cytoplasm. The enzyme catalyses tRNA(Thr) + L-threonine + ATP = L-threonyl-tRNA(Thr) + AMP + diphosphate + H(+). Catalyzes the attachment of threonine to tRNA(Thr) in a two-step reaction: L-threonine is first activated by ATP to form Thr-AMP and then transferred to the acceptor end of tRNA(Thr). Also edits incorrectly charged L-seryl-tRNA(Thr). The polypeptide is Threonine--tRNA ligase (Lactobacillus acidophilus (strain ATCC 700396 / NCK56 / N2 / NCFM)).